Reading from the N-terminus, the 543-residue chain is Keratin, type II cytoskeletal 75 (543 aa).

Over residues 1-16 (MSRQSTITFQTSSRRG) the composition is skewed to polar residues. A disordered region spans residues 1–48 (MSRQSTITFQTSSRRGFSTASATTPATSRSRFSSASVTHSPAGSGGLG). Residues 1–144 (MSRQSTITFQ…DPNIQRVRKE (144 aa)) are head. The segment covering 17 to 36 (FSTASATTPATSRSRFSSAS) has biased composition (low complexity). Residues 145–180 (EREQIKTLNNKFASFIDKVRFLEQQNKVLETKWSLL) form a coil 1A region. In terms of domain architecture, IF rod spans 145–458 (EREQIKTLNN…KLLEGEECRL (314 aa)). The linker 1 stretch occupies residues 181–199 (QEQGTRTVRQSLEPFFEAY). Positions 200 to 292 (ITDLRRQLDS…LFEAELCQMQ (93 aa)) are coil 1B. The linker 12 stretch occupies residues 293–315 (TRVSDTSVVLSMDNNRSLDLDSI). The tract at residues 316–454 (IAEVKAQYEE…ATYRKLLEGE (139 aa)) is coil 2. The segment at 455 to 543 (ECRLSGEGVS…TSSSRKSYKH (89 aa)) is tail. The tract at residues 511-543 (SSFSNSSSRGLGGSGSSFKFVSTTSSSRKSYKH) is disordered. Low complexity predominate over residues 526–543 (SSFKFVSTTSSSRKSYKH).

The protein belongs to the intermediate filament family. In terms of assembly, heterodimer of a type I and a type II keratin. May associate with KRT17.

In terms of biological role, plays a central role in hair and nail formation. Essential component of keratin intermediate filaments in the companion layer of the hair follicle. The chain is Keratin, type II cytoskeletal 75 (KRT75) from Bos taurus (Bovine).